The primary structure comprises 182 residues: UPF0397 protein BT9727_2423 (182 aa).

5 consecutive transmembrane segments (helical) span residues 9-29, 40-60, 71-91, 114-134, and 142-162; these read VVAI…GFSI, AILT…IGLI, WGIW…MGFI, ITGL…DIIV, and IVIQ…VLGL.

The protein belongs to the UPF0397 family.

Its subcellular location is the cell membrane. This chain is UPF0397 protein BT9727_2423, found in Bacillus thuringiensis subsp. konkukian (strain 97-27).